The sequence spans 100 residues: Urease subunit gamma (100 aa).

The protein belongs to the urease gamma subunit family. As to quaternary structure, heterotrimer of UreA (gamma), UreB (beta) and UreC (alpha) subunits. Three heterotrimers associate to form the active enzyme.

It is found in the cytoplasm. The enzyme catalyses urea + 2 H2O + H(+) = hydrogencarbonate + 2 NH4(+). Its pathway is nitrogen metabolism; urea degradation; CO(2) and NH(3) from urea (urease route): step 1/1. This chain is Urease subunit gamma, found in Methylocella silvestris (strain DSM 15510 / CIP 108128 / LMG 27833 / NCIMB 13906 / BL2).